The sequence spans 209 residues: Imidazole glycerol phosphate synthase subunit HisH (209 aa).

The 207-residue stretch at K3–F209 folds into the Glutamine amidotransferase type-1 domain. The Nucleophile role is filled by C81. Active-site residues include H185 and E187.

In terms of assembly, heterodimer of HisH and HisF.

The protein localises to the cytoplasm. It catalyses the reaction 5-[(5-phospho-1-deoxy-D-ribulos-1-ylimino)methylamino]-1-(5-phospho-beta-D-ribosyl)imidazole-4-carboxamide + L-glutamine = D-erythro-1-(imidazol-4-yl)glycerol 3-phosphate + 5-amino-1-(5-phospho-beta-D-ribosyl)imidazole-4-carboxamide + L-glutamate + H(+). It carries out the reaction L-glutamine + H2O = L-glutamate + NH4(+). Its pathway is amino-acid biosynthesis; L-histidine biosynthesis; L-histidine from 5-phospho-alpha-D-ribose 1-diphosphate: step 5/9. Functionally, IGPS catalyzes the conversion of PRFAR and glutamine to IGP, AICAR and glutamate. The HisH subunit catalyzes the hydrolysis of glutamine to glutamate and ammonia as part of the synthesis of IGP and AICAR. The resulting ammonia molecule is channeled to the active site of HisF. This is Imidazole glycerol phosphate synthase subunit HisH from Prochlorococcus marinus (strain NATL2A).